The primary structure comprises 235 residues: Carbonic anhydrase 1 (235 aa).

Residues 1–235 form the Alpha-carbonic anhydrase domain; it reads GNKQSPVDIK…LKGRTVKASF (235 aa). H40 (proton donor/acceptor) is an active-site residue. Zn(2+) contacts are provided by H69, H71, and H94. Residues T174 and 174 to 175 contribute to the substrate site; that span reads TH.

This sequence belongs to the alpha-carbonic anhydrase family. Zn(2+) is required as a cofactor.

The protein localises to the cytoplasm. It catalyses the reaction hydrogencarbonate + H(+) = CO2 + H2O. The catalysed reaction is urea = cyanamide + H2O. Inhibited by acetazolamide. Catalyzes the reversible hydration of carbon dioxide. Can hydrate cyanamide to urea. The polypeptide is Carbonic anhydrase 1 (CA1) (Oryctolagus cuniculus (Rabbit)).